Consider the following 454-residue polypeptide: Bifunctional protein GlmU (454 aa).

The tract at residues 1 to 232 (MTDRTCLSIV…VDNVIGINNR (232 aa)) is pyrophosphorylase. UDP-N-acetyl-alpha-D-glucosamine is bound by residues 11–14 (LAAG), Lys-25, Gln-78, and 83–84 (GT). Residue Asp-108 coordinates Mg(2+). Residues Gly-144, Glu-158, Asn-173, and Asn-230 each contribute to the UDP-N-acetyl-alpha-D-glucosamine site. Asn-230 is a Mg(2+) binding site. Residues 233–253 (VELAEAEAIWQQRKRREMMLA) form a linker region. Residues 254 to 454 (GVTLIAPETV…AIKAAKTATK (201 aa)) form an N-acetyltransferase region. The UDP-N-acetyl-alpha-D-glucosamine site is built by Arg-319 and Lys-337. His-349 (proton acceptor) is an active-site residue. Residues Tyr-352 and Asn-363 each coordinate UDP-N-acetyl-alpha-D-glucosamine. Acetyl-CoA contacts are provided by residues Ala-366, 372 to 373 (NY), Ser-391, Ser-409, and Arg-426.

It in the N-terminal section; belongs to the N-acetylglucosamine-1-phosphate uridyltransferase family. This sequence in the C-terminal section; belongs to the transferase hexapeptide repeat family. Homotrimer. It depends on Mg(2+) as a cofactor.

The protein localises to the cytoplasm. It carries out the reaction alpha-D-glucosamine 1-phosphate + acetyl-CoA = N-acetyl-alpha-D-glucosamine 1-phosphate + CoA + H(+). It catalyses the reaction N-acetyl-alpha-D-glucosamine 1-phosphate + UTP + H(+) = UDP-N-acetyl-alpha-D-glucosamine + diphosphate. It functions in the pathway nucleotide-sugar biosynthesis; UDP-N-acetyl-alpha-D-glucosamine biosynthesis; N-acetyl-alpha-D-glucosamine 1-phosphate from alpha-D-glucosamine 6-phosphate (route II): step 2/2. The protein operates within nucleotide-sugar biosynthesis; UDP-N-acetyl-alpha-D-glucosamine biosynthesis; UDP-N-acetyl-alpha-D-glucosamine from N-acetyl-alpha-D-glucosamine 1-phosphate: step 1/1. Its pathway is bacterial outer membrane biogenesis; LPS lipid A biosynthesis. Functionally, catalyzes the last two sequential reactions in the de novo biosynthetic pathway for UDP-N-acetylglucosamine (UDP-GlcNAc). The C-terminal domain catalyzes the transfer of acetyl group from acetyl coenzyme A to glucosamine-1-phosphate (GlcN-1-P) to produce N-acetylglucosamine-1-phosphate (GlcNAc-1-P), which is converted into UDP-GlcNAc by the transfer of uridine 5-monophosphate (from uridine 5-triphosphate), a reaction catalyzed by the N-terminal domain. The chain is Bifunctional protein GlmU from Brucella anthropi (strain ATCC 49188 / DSM 6882 / CCUG 24695 / JCM 21032 / LMG 3331 / NBRC 15819 / NCTC 12168 / Alc 37) (Ochrobactrum anthropi).